The following is a 402-amino-acid chain: Myb-related protein 1 (402 aa).

The HTH myb-type domain maps to 42-102 (TDAKPRLKWT…HLQKYRLSKN (61 aa)). A DNA-binding region (H-T-H motif) is located at residues 73 to 98 (PKTIMKVMGIPGLTLYHLKSHLQKYR). The stretch at 148–168 (SDALQMQIEVQRRLHEQLEVQ) forms a coiled coil. The LHEQLE signature appears at 161-166 (LHEQLE). The segment covering 238-260 (QQMQKTYPPNSSLDSCLTSSEGT) has biased composition (polar residues). 3 disordered regions span residues 238 to 266 (QQMQ…APKM), 344 to 363 (EHRG…FNEN), and 382 to 402 (HDEN…FSWN).

The protein belongs to the MYB-CC family. In terms of assembly, isoforms 1 and 2: homodimer. Isoform 3: loss of dimerization. As to expression, expressed in phloem and/or cambium.

It localises to the nucleus. In terms of biological role, transcription factor that may act on the GAL1 promoter. Acts redundantly with MYR2 as a repressor of flowering and organ elongation under decreased light intensity. Represses gibberellic acid (GA)-dependent responses and affects levels of bioactive GA. The chain is Myb-related protein 1 from Arabidopsis thaliana (Mouse-ear cress).